A 425-amino-acid polypeptide reads, in one-letter code: Serine--tRNA ligase (425 aa).

232-234 (TSE) is a binding site for L-serine. ATP-binding positions include 263 to 265 (RRE) and V279. E286 contacts L-serine. Residue 350 to 353 (EAVS) participates in ATP binding. T387 is a binding site for L-serine.

It belongs to the class-II aminoacyl-tRNA synthetase family. Type-1 seryl-tRNA synthetase subfamily. As to quaternary structure, homodimer. The tRNA molecule binds across the dimer.

Its subcellular location is the cytoplasm. The catalysed reaction is tRNA(Ser) + L-serine + ATP = L-seryl-tRNA(Ser) + AMP + diphosphate + H(+). The enzyme catalyses tRNA(Sec) + L-serine + ATP = L-seryl-tRNA(Sec) + AMP + diphosphate + H(+). It functions in the pathway aminoacyl-tRNA biosynthesis; selenocysteinyl-tRNA(Sec) biosynthesis; L-seryl-tRNA(Sec) from L-serine and tRNA(Sec): step 1/1. In terms of biological role, catalyzes the attachment of serine to tRNA(Ser). Is also able to aminoacylate tRNA(Sec) with serine, to form the misacylated tRNA L-seryl-tRNA(Sec), which will be further converted into selenocysteinyl-tRNA(Sec). This Methanoculleus marisnigri (strain ATCC 35101 / DSM 1498 / JR1) protein is Serine--tRNA ligase.